The following is a 131-amino-acid chain: Single-stranded DNA-binding protein 2 (131 aa).

Residues 1 to 103 (MYNKVIMIGR…VLASSFQLLE (103 aa)) enclose the SSB domain. An Important for interaction with partner proteins motif is present at residues 126–131 (EEELPF).

As to quaternary structure, homotetramer.

Functionally, plays an important role in DNA replication, recombination and repair. Binds to ssDNA and to an array of partner proteins to recruit them to their sites of action during DNA metabolism. In Streptococcus agalactiae serotype V (strain ATCC BAA-611 / 2603 V/R), this protein is Single-stranded DNA-binding protein 2 (ssb2).